The sequence spans 357 residues: 2-oxoglutarate-dependent dioxygenase 11 (357 aa).

A Fe2OG dioxygenase domain is found at 207–307 (QPRGLRMAYY…RISAALFHYP (101 aa)). Fe cation-binding residues include His-231, Asp-233, and His-288. Position 298 (Arg-298) interacts with 2-oxoglutarate.

It belongs to the iron/ascorbate-dependent oxidoreductase family. The cofactor is Fe(2+). L-ascorbate is required as a cofactor. As to expression, expressed in shoots.

The protein resides in the cytoplasm. The enzyme catalyses melatonin + 2-oxoglutarate + O2 = 2-hydroxymelatonin + succinate + CO2. Functionally, involved in melatonin degradation. Catalyzes the hydroxylation of melatonin to produce 2-hydroxymelatonin. This Oryza sativa subsp. japonica (Rice) protein is 2-oxoglutarate-dependent dioxygenase 11.